The sequence spans 96 residues: Protein RSI-1 (96 aa).

The signal sequence occupies residues 1–29 (MAKSGYNASFLLLISMFLILLTFSNVVEG).

This sequence belongs to the GASA family. In terms of processing, six disulfide bonds may be present. In terms of tissue distribution, expressed very early in lateral root development.

It is found in the secreted. In Solanum lycopersicum (Tomato), this protein is Protein RSI-1 (RSI-1).